The sequence spans 1190 residues: DNA-directed RNA polymerase subunit beta (1190 aa).

Belongs to the RNA polymerase beta chain family. In terms of assembly, the RNAP catalytic core consists of 2 alpha, 1 beta, 1 beta' and 1 omega subunit. When a sigma factor is associated with the core the holoenzyme is formed, which can initiate transcription.

It carries out the reaction RNA(n) + a ribonucleoside 5'-triphosphate = RNA(n+1) + diphosphate. Functionally, DNA-dependent RNA polymerase catalyzes the transcription of DNA into RNA using the four ribonucleoside triphosphates as substrates. The polypeptide is DNA-directed RNA polymerase subunit beta (Geobacillus thermodenitrificans (strain NG80-2)).